A 265-amino-acid polypeptide reads, in one-letter code: Bradykinin-potentiating and C-type natriuretic peptides (265 aa).

Residues 1 to 23 (MVLSRLAASGLLLLALLALSVDG) form the signal peptide. The propeptide occupies 24-30 (KPVQQWA). Gln31 carries the pyrrolidone carboxylic acid modification. A propeptide spanning residues 44-50 (LKVQQWA) is cleaved from the precursor. Pyrrolidone carboxylic acid is present on Gln51. A propeptide spanning residues 64–70 (LTVQQWA) is cleaved from the precursor. Gln71 carries the pyrrolidone carboxylic acid modification. Residues 81–87 (LTVQQWA) constitute a propeptide that is removed on maturation. A Pyrrolidone carboxylic acid modification is found at Gln88. The propeptide occupies 100-106 (LEVQQWA). A Pyrrolidone carboxylic acid modification is found at Gln107. Residues 118–120 (APL) constitute a propeptide that is removed on maturation. Gln121 carries the post-translational modification Pyrrolidone carboxylic acid. A propeptide is located at residue Val126. Gln127 is modified (pyrrolidone carboxylic acid). Positions 132–241 (LLQPHESPAS…GGARRLKGLA (110 aa)) are excised as a propeptide. The tract at residues 153-211 (GPEAASGVPSAGAEVGRSGSKAPAAPHRLSKSKGAAATSAASRPMRDLRPDGKQARQNW) is disordered. A compositionally biased stretch (low complexity) spans 184–194 (SKGAAATSAAS). Basic and acidic residues predominate over residues 196-206 (PMRDLRPDGKQ). Residues Cys249 and Cys265 are joined by a disulfide bond.

The protein in the N-terminal section; belongs to the bradykinin-potentiating peptide family. It in the C-terminal section; belongs to the natriuretic peptide family. Expressed by the venom gland.

It localises to the secreted. The protein localises to the cytoplasm. The protein resides in the cytosol. Modestly inhibits ACE (with highest affinity for the N-site) and reveals strong bradykinin-potentiating activity. Induces nitric oxide (NO) production depended on muscarinic acetylcholine receptor M1 subtype (CHRM1) and bradykinin B2 receptor (BDKRB2) activation. Both these receptors contribute to the vasodilation induced by this peptide that may have an indirect action on BDKRB2 and a direct agonistic action on CHRM1. In terms of biological role, peptide with several activities. It inhibits the activity of the angiotensin-converting enzyme (ACE) by a preferential interaction with its C-domain. It evokes transient hypotension (-14 mmHg) similar to that evoked by 0.5 ug of bradykinin, when injected alone into rats. It has a high bradykinin-potentiating effect (120%), when 60 nmol of BPP-10c are coinjected with 0.5 ug of bradykinin into rats. Does not affect angiotensin-1 pressor effects. Shows potent and long-lasting antihypertensive activity as well as a reduction of the heart rate. It also binds and dose-dependently promotes the activation of cytosolic argininosuccinate synthase (ASS1), an enzyme that catalyzes the conversion of citrulline, L-aspartate and ATP to argininosuccinate, AMP and pyrophosphate. It also enhances ASS1-dependent arginine production in HEK 293 cells, as well as in spontaneous hypertensive rat (SHR) and Wistar rat plasma. In addition, it induces the production of nitric-oxide (NO) by HUVEC cells via the endothelial nitric-oxide synthase (NOS3), which use arginine as a substrate and produce NO. It has been shown to be internalized by ASS1-expressing endothelial (HUVEC) and kidney (HEK 293) cells, and is detected homogenously distributed within the cell cytoplasm for up to 2 hours. Its function is as follows. has a vasorelaxant activity in rat aortic strips and a diuretic potency in anesthetized rats. May act by activating natriuretic receptors (NPR1 and/or NPR2). The chain is Bradykinin-potentiating and C-type natriuretic peptides from Bothrops insularis (Golden lancehead).